The chain runs to 122 residues: Large ribosomal subunit protein uL14c (122 aa).

It belongs to the universal ribosomal protein uL14 family. As to quaternary structure, part of the 50S ribosomal subunit.

Its subcellular location is the plastid. It is found in the chloroplast. Binds to 23S rRNA. The polypeptide is Large ribosomal subunit protein uL14c (Pyropia yezoensis (Susabi-nori)).